We begin with the raw amino-acid sequence, 432 residues long: CBL-interacting serine/threonine-protein kinase 17 (432 aa).

The 256-residue stretch at 11 to 266 folds into the Protein kinase domain; that stretch reads YELGRTLGEG…IAGIKAHDWF (256 aa). Residues 17–25 and Lys40 contribute to the ATP site; that span reads LGEGNSAKV. Catalysis depends on Asp134, which acts as the Proton acceptor. Residues 152 to 181 form an activation loop region; sequence DFGLSALSQHYREDGLLHTTCGSPNYVAPE. At Ser156 the chain carries Phosphoserine. Residue Thr170 is modified to Phosphothreonine. Residues 301 to 325 enclose the NAF domain; it reads DSPTIINAFQLIGMSSFLDLSGFFE. The PPI stretch occupies residues 331 to 360; that stretch reads ERQIRFTSNSLAKDLLENIETIFTEMGFCL.

Belongs to the protein kinase superfamily. CAMK Ser/Thr protein kinase family. SNF1 subfamily. In terms of assembly, interacts with CBL1. Requires Mn(2+) as cofactor.

The enzyme catalyses L-seryl-[protein] + ATP = O-phospho-L-seryl-[protein] + ADP + H(+). The catalysed reaction is L-threonyl-[protein] + ATP = O-phospho-L-threonyl-[protein] + ADP + H(+). In terms of biological role, CIPK serine-threonine protein kinases interact with CBL proteins. Binding of a CBL protein to the regulatory NAF domain of CIPK protein lead to the activation of the kinase in a calcium-dependent manner. In Arabidopsis thaliana (Mouse-ear cress), this protein is CBL-interacting serine/threonine-protein kinase 17 (CIPK17).